The primary structure comprises 207 residues: Mediator of RNA polymerase II transcription subunit 21 (207 aa).

Residues 36–120 (IPPPDVPDAA…APDSPRTFAS (85 aa)) are disordered. Residues 91–108 (GEGAQTPGPAAGAGADPN) are compositionally biased toward low complexity. The stretch at 146 to 194 (IDSSEAEQEKRIRELEGELRQVEEERELKMRELKRLRRTLENVLTAVET) forms a coiled coil.

This sequence belongs to the Mediator complex subunit 21 family. Component of the Mediator complex.

It localises to the nucleus. Functionally, component of the Mediator complex, a coactivator involved in the regulated transcription of nearly all RNA polymerase II-dependent genes. Mediator functions as a bridge to convey information from gene-specific regulatory proteins to the basal RNA polymerase II transcription machinery. Mediator is recruited to promoters by direct interactions with regulatory proteins and serves as a scaffold for the assembly of a functional preinitiation complex with RNA polymerase II and the general transcription factors. The sequence is that of Mediator of RNA polymerase II transcription subunit 21 (srb7) from Aspergillus fumigatus (strain ATCC MYA-4609 / CBS 101355 / FGSC A1100 / Af293) (Neosartorya fumigata).